We begin with the raw amino-acid sequence, 221 residues long: Putative gene 53 protein (221 aa).

The chain is Putative gene 53 protein (53) from Bacillus phage SP01 (Bacteriophage SP01).